A 292-amino-acid chain; its full sequence is Bifunctional protein FolD (292 aa).

NADP(+) contacts are provided by residues 169–171 (GRG), Thr-196, and Val-237.

The protein belongs to the tetrahydrofolate dehydrogenase/cyclohydrolase family. As to quaternary structure, homodimer.

The enzyme catalyses (6R)-5,10-methylene-5,6,7,8-tetrahydrofolate + NADP(+) = (6R)-5,10-methenyltetrahydrofolate + NADPH. It carries out the reaction (6R)-5,10-methenyltetrahydrofolate + H2O = (6R)-10-formyltetrahydrofolate + H(+). Its pathway is one-carbon metabolism; tetrahydrofolate interconversion. In terms of biological role, catalyzes the oxidation of 5,10-methylenetetrahydrofolate to 5,10-methenyltetrahydrofolate and then the hydrolysis of 5,10-methenyltetrahydrofolate to 10-formyltetrahydrofolate. In Bifidobacterium longum (strain NCC 2705), this protein is Bifunctional protein FolD.